Here is a 286-residue protein sequence, read N- to C-terminus: CBY1-interacting BAR domain-containing protein 1 (286 aa).

The transit peptide at 1–47 (MLRRNLDERDAQTKQLQDAVTNVEKHFGELCQIFAAYVRKTARLRDK) directs the protein to the mitochondrion. Residues 10–220 (DAQTKQLQDA…NIDEDEDLEV (211 aa)) form a BAR-like region. A coiled-coil region spans residues 107–178 (KMKRDDLKAT…IDNFEKQKIK (72 aa)). Positions 258 to 286 (GQISTCRTRKDQQVEDEDDEELDVTEDEN) are disordered. Positions 271-286 (VEDEDDEELDVTEDEN) are enriched in acidic residues.

It belongs to the CIBAR family. In terms of assembly, homodimer (via BAR-like domain). Heterodimer with FAM92B (via BAR-like domains). Interacts (via BAR-like domain) with CBY1; this interaction is required for targeting FAM92A to centriole and cilium basal body. Interacts (via BAR-like domain) with CBY3; both proteins form a ninefold symmetric structure at the flagellar base; are recruited to the annulus in a mutually dependent manner and regulate annulus positionning. In terms of tissue distribution, expressed in the heart, liver, spleen, lung, kidney, brain and muscle (at protein level). Strongly expressed throughout the developing limb bud, including the progress zone and the apical ectodermal ridge.

It is found in the cytoplasm. It localises to the cytoskeleton. The protein resides in the microtubule organizing center. The protein localises to the centrosome. Its subcellular location is the centriole. It is found in the cilium basal body. It localises to the cell projection. The protein resides in the cilium. The protein localises to the nucleus. Its subcellular location is the mitochondrion inner membrane. It is found in the flagellum. Its function is as follows. Plays a critical role in regulating mitochondrial ultrastructure and function by maintaining the integrity of mitochondrial morphology, particularly the organization of cristae. Preferentially binds to negatively charged phospholipids like cardiolipin and phosphatidylinositol 4,5-bisphosphate enhancing its interaction with mitochondrial membranes. Induces membrane curvature and tubulation, which are critical for maintaining mitochondrial ultrastructure and the organization of cristae. Plays a crucial role in ciliogenesis. May play a role in limb development through its role in ciliogenesis. Plays a key role in the correct positioning of the annulus, a septin-based ring structure in the sperm flagellum, serving both as a physical barrier and a membrane diffusion barrier that separates the midpiece (MP) from the principal piece (PP). This positioning is essential for proper sperm motility and function. Interacts with CBY3 to form a complex which localizes to the curved membrane region of the flagellar pocket. By doing so, may provide stability and rigidity to the periannular membrane to prevent membrane deformation. This function is crucial for halting annulus migration at the proximal end of the fibrous sheath-containing PP. In Mus musculus (Mouse), this protein is CBY1-interacting BAR domain-containing protein 1.